The following is a 473-amino-acid chain: ATP synthase subunit beta (473 aa).

156 to 163 (GGAGVGKT) is a binding site for ATP.

This sequence belongs to the ATPase alpha/beta chains family. F-type ATPases have 2 components, CF(1) - the catalytic core - and CF(0) - the membrane proton channel. CF(1) has five subunits: alpha(3), beta(3), gamma(1), delta(1), epsilon(1). CF(0) has three main subunits: a(1), b(2) and c(9-12). The alpha and beta chains form an alternating ring which encloses part of the gamma chain. CF(1) is attached to CF(0) by a central stalk formed by the gamma and epsilon chains, while a peripheral stalk is formed by the delta and b chains.

It localises to the cell inner membrane. It carries out the reaction ATP + H2O + 4 H(+)(in) = ADP + phosphate + 5 H(+)(out). Its function is as follows. Produces ATP from ADP in the presence of a proton gradient across the membrane. The catalytic sites are hosted primarily by the beta subunits. The sequence is that of ATP synthase subunit beta from Desulfovibrio desulfuricans (strain ATCC 27774 / DSM 6949 / MB).